A 329-amino-acid chain; its full sequence is DNA-directed RNA polymerase subunit alpha (329 aa).

Residues 1 to 235 (MQGSVTEFLK…EQLEAFVDLR (235 aa)) are alpha N-terminal domain (alpha-NTD). The interval 249-329 (FDPILLRPVD…NWPPASIADE (81 aa)) is alpha C-terminal domain (alpha-CTD).

This sequence belongs to the RNA polymerase alpha chain family. Homodimer. The RNAP catalytic core consists of 2 alpha, 1 beta, 1 beta' and 1 omega subunit. When a sigma factor is associated with the core the holoenzyme is formed, which can initiate transcription.

The catalysed reaction is RNA(n) + a ribonucleoside 5'-triphosphate = RNA(n+1) + diphosphate. DNA-dependent RNA polymerase catalyzes the transcription of DNA into RNA using the four ribonucleoside triphosphates as substrates. This chain is DNA-directed RNA polymerase subunit alpha, found in Yersinia pestis bv. Antiqua (strain Antiqua).